The primary structure comprises 267 residues: Large ribosomal subunit protein uL3 (267 aa).

The interval 124 to 147 (NQHIGPKSHGGGGGSQPVRQTGSL) is disordered.

It belongs to the universal ribosomal protein uL3 family. As to quaternary structure, part of the 50S ribosomal subunit. Forms a cluster with proteins L14 and L19.

Its function is as follows. One of the primary rRNA binding proteins, it binds directly near the 3'-end of the 23S rRNA, where it nucleates assembly of the 50S subunit. The polypeptide is Large ribosomal subunit protein uL3 (Mycoplasmopsis agalactiae (strain NCTC 10123 / CIP 59.7 / PG2) (Mycoplasma agalactiae)).